A 729-amino-acid polypeptide reads, in one-letter code: Phosphoribosylformylglycinamidine synthase subunit PurL (729 aa).

Residue H54 is part of the active site. ATP is bound by residues Y57 and K96. E98 is a binding site for Mg(2+). Substrate-binding positions include 99-102 and R121; that span reads SHNH. H100 serves as the catalytic Proton acceptor. D122 provides a ligand contact to Mg(2+). Residue Q245 participates in substrate binding. Position 273 (D273) interacts with Mg(2+). 317 to 319 provides a ligand contact to substrate; sequence ETQ. Positions 495 and 532 each coordinate ATP. N533 is a binding site for Mg(2+). Substrate is bound at residue S535.

It belongs to the FGAMS family. In terms of assembly, monomer. Part of the FGAM synthase complex composed of 1 PurL, 1 PurQ and 2 PurS subunits.

The protein localises to the cytoplasm. The catalysed reaction is N(2)-formyl-N(1)-(5-phospho-beta-D-ribosyl)glycinamide + L-glutamine + ATP + H2O = 2-formamido-N(1)-(5-O-phospho-beta-D-ribosyl)acetamidine + L-glutamate + ADP + phosphate + H(+). It participates in purine metabolism; IMP biosynthesis via de novo pathway; 5-amino-1-(5-phospho-D-ribosyl)imidazole from N(2)-formyl-N(1)-(5-phospho-D-ribosyl)glycinamide: step 1/2. Part of the phosphoribosylformylglycinamidine synthase complex involved in the purines biosynthetic pathway. Catalyzes the ATP-dependent conversion of formylglycinamide ribonucleotide (FGAR) and glutamine to yield formylglycinamidine ribonucleotide (FGAM) and glutamate. The FGAM synthase complex is composed of three subunits. PurQ produces an ammonia molecule by converting glutamine to glutamate. PurL transfers the ammonia molecule to FGAR to form FGAM in an ATP-dependent manner. PurS interacts with PurQ and PurL and is thought to assist in the transfer of the ammonia molecule from PurQ to PurL. The sequence is that of Phosphoribosylformylglycinamidine synthase subunit PurL from Staphylococcus epidermidis (strain ATCC 12228 / FDA PCI 1200).